Reading from the N-terminus, the 338-residue chain is Lumican (338 aa).

The signal sequence occupies residues M1–G18. At Q19 the chain carries Pyrrolidone carboxylic acid. Sulfotyrosine occurs at positions 20, 21, 23, and 30. The LRRNT domain maps to S28 to P66. LRR repeat units follow at residues G67–N88, D91–K114, Q117–K137, S138–V159, N160–K181, S185–V205, S206–R227, A230–V253, S255–L276, and E277–K296. The N-linked (GlcNAc...) (keratan sulfate) asparagine glycan is linked to N88. An N-linked (GlcNAc...) (keratan sulfate) asparagine glycan is attached at N127. A glycan (N-linked (GlcNAc...) (keratan sulfate) asparagine) is linked at N160. N-linked (GlcNAc...) (keratan sulfate) asparagine glycosylation is present at N252. C295 and C328 are joined by a disulfide. At S304 the chain carries Phosphoserine. The stretch at K305 to Y326 is one LRR 11 repeat.

Belongs to the small leucine-rich proteoglycan (SLRP) family. SLRP class II subfamily. Binds to laminin. In terms of processing, sulfated on tyrosine residue(s). Contains keratan sulfate. As to expression, cornea and other tissues.

It localises to the secreted. The protein resides in the extracellular space. Its subcellular location is the extracellular matrix. This chain is Lumican (LUM), found in Homo sapiens (Human).